The chain runs to 322 residues: Lymphokine-activated killer T-cell-originated protein kinase (322 aa).

The residue at position 1 (M1) is an N-acetylmethionine. A phosphothreonine mark is found at T9 and T24. A Phosphoserine modification is found at S32. The Protein kinase domain occupies 32-322; it reads SPFMQKLGFG…HIVEALETDV (291 aa). 38 to 46 is an ATP binding site; that stretch reads LGFGTGVNV. Phosphoserine is present on S59. K64 is a binding site for ATP. The active-site Proton acceptor is D167. A Glycyl lysine isopeptide (Lys-Gly) (interchain with G-Cter in SUMO2) cross-link involves residue K169. Positions 320–322 are PDZ-interaction; it reads TDV.

Belongs to the protein kinase superfamily. STE Ser/Thr protein kinase family. MAP kinase kinase subfamily. As to quaternary structure, interacts with DLG1 and TP53. Phosphorylated; in a cell-cycle dependent manner at mitosis. In terms of tissue distribution, expressed in the testis and placenta. In the testis, restrictedly expressed in outer cell layer of seminiferous tubules.

It carries out the reaction L-seryl-[protein] + ATP = O-phospho-L-seryl-[protein] + ADP + H(+). It catalyses the reaction L-threonyl-[protein] + ATP = O-phospho-L-threonyl-[protein] + ADP + H(+). The enzyme catalyses L-tyrosyl-[protein] + ATP = O-phospho-L-tyrosyl-[protein] + ADP + H(+). Activated by phosphorylation. Phosphorylates MAP kinase p38. Seems to be active only in mitosis. May also play a role in the activation of lymphoid cells. When phosphorylated, forms a complex with TP53, leading to TP53 destabilization and attenuation of G2/M checkpoint during doxorubicin-induced DNA damage. The protein is Lymphokine-activated killer T-cell-originated protein kinase (PBK) of Homo sapiens (Human).